Here is a 267-residue protein sequence, read N- to C-terminus: Small ribosomal subunit protein uS3 (267 aa).

One can recognise a KH type-2 domain in the interval 43–111 (IRKAMSKDLE…QVQLNIFEVK (69 aa)). The segment at 216-267 (FEEQQAQQSNNRQGRRGDRRPRRGQRNAAPQQNAAAEAPAAAEAPAATETKE) is disordered. Residues 228–240 (QGRRGDRRPRRGQ) are compositionally biased toward basic residues. Residues 241–267 (RNAAPQQNAAAEAPAAAEAPAATETKE) show a composition bias toward low complexity.

The protein belongs to the universal ribosomal protein uS3 family. Part of the 30S ribosomal subunit. Forms a tight complex with proteins S10 and S14.

Functionally, binds the lower part of the 30S subunit head. Binds mRNA in the 70S ribosome, positioning it for translation. This is Small ribosomal subunit protein uS3 from Bifidobacterium adolescentis (strain ATCC 15703 / DSM 20083 / NCTC 11814 / E194a).